Here is a 378-residue protein sequence, read N- to C-terminus: Chlorophyll synthase, chloroplastic (378 aa).

The transit peptide at 1-45 directs the protein to the chloroplast; sequence MATSHPLAAAAATSSSSATFRPPLRFLSSPPSSLTLNRRRSFPVV. 7 helical membrane passes run 173 to 193, 199 to 219, 232 to 252, 257 to 277, 302 to 322, 327 to 347, and 357 to 377; these read VITQ…LLDI, FPII…YSAP, FALG…LFGT, IVVL…VNDF, WICV…LLST, YALA…QYFL, and YQAS…LATS.

It belongs to the UbiA prenyltransferase family. Chlorophyll synthase subfamily. Requires Mg(2+) as cofactor. The cofactor is Zn(2+). Mn(2+) is required as a cofactor.

It is found in the plastid. Its subcellular location is the chloroplast membrane. The enzyme catalyses phytyl diphosphate + chlorophyllide a + H(+) = chlorophyll a + diphosphate. Its activity is regulated as follows. Inhibited by N-phenylmaleimide (NPM) and diacetyl. Functionally, involved in one of the last steps of the biosynthesis of chlorophyll a. Catalyzes the esterification of chlorophillide a with either geranylgeranyldiphosphate (GGPP) or phytyldiphosphate (PhyPP). May also use with a lower efficiency the monophosphates GGMP and PhyMP, but not the non-phosphorylated alcohols geranylgeraniol and phytol. The tetraprenyl diphosphate must bind to the enzyme as the first substrate and esterification occurs when this pre-loaded enzyme meets the second substrate, chlorophyllide. The sequence is that of Chlorophyll synthase, chloroplastic (CHLG) from Avena sativa (Oat).